The following is a 274-amino-acid chain: Bis(5'-nucleosyl)-tetraphosphatase, symmetrical (274 aa).

This sequence belongs to the Ap4A hydrolase family.

It catalyses the reaction P(1),P(4)-bis(5'-adenosyl) tetraphosphate + H2O = 2 ADP + 2 H(+). In terms of biological role, hydrolyzes diadenosine 5',5'''-P1,P4-tetraphosphate to yield ADP. The sequence is that of Bis(5'-nucleosyl)-tetraphosphatase, symmetrical from Shewanella sp. (strain W3-18-1).